The primary structure comprises 259 residues: Phosphate import ATP-binding protein PstB 1 (259 aa).

Residues 13-254 (IQVRGLEFFY…PSKTQTEDYI (242 aa)) enclose the ABC transporter domain. Position 45–52 (45–52 (GPSGCGKS)) interacts with ATP.

This sequence belongs to the ABC transporter superfamily. Phosphate importer (TC 3.A.1.7) family. As to quaternary structure, the complex is composed of two ATP-binding proteins (PstB), two transmembrane proteins (PstC and PstA) and a solute-binding protein (PstS).

It localises to the cell inner membrane. The catalysed reaction is phosphate(out) + ATP + H2O = ADP + 2 phosphate(in) + H(+). Functionally, part of the ABC transporter complex PstSACB involved in phosphate import. Responsible for energy coupling to the transport system. In Pseudomonas savastanoi pv. phaseolicola (strain 1448A / Race 6) (Pseudomonas syringae pv. phaseolicola (strain 1448A / Race 6)), this protein is Phosphate import ATP-binding protein PstB 1.